Here is a 457-residue protein sequence, read N- to C-terminus: Adenylosuccinate synthetase isozyme 1 (457 aa).

The tract at residues 1 to 25 (MSGTRASNDRPPSAGGVKRGRLQHE) is disordered. GTP is bound by residues 42 to 48 (GDEGKGK) and 70 to 72 (GHT). Aspartate 43 serves as the catalytic Proton acceptor. Mg(2+) is bound by residues aspartate 43 and glycine 70. Position 43 (aspartate 43) interacts with substrate. IMP is bound by residues 43 to 46 (DEGK), 68 to 71 (NAGH), threonine 163, arginine 177, asparagine 256, threonine 271, and arginine 335. The active-site Proton donor is histidine 71. Position 331–337 (331–337 (VTTGRKR)) interacts with substrate. GTP is bound by residues arginine 337, 363-365 (KLD), and 445-448 (GVGK).

The protein belongs to the adenylosuccinate synthetase family. As to quaternary structure, homodimer. The cofactor is Mg(2+).

It is found in the cytoplasm. It catalyses the reaction IMP + L-aspartate + GTP = N(6)-(1,2-dicarboxyethyl)-AMP + GDP + phosphate + 2 H(+). It functions in the pathway purine metabolism; AMP biosynthesis via de novo pathway; AMP from IMP: step 1/2. In terms of biological role, component of the purine nucleotide cycle (PNC), which interconverts IMP and AMP to regulate the nucleotide levels in various tissues, and which contributes to glycolysis and ammoniagenesis. Catalyzes the first committed step in the biosynthesis of AMP from IMP. In Bos taurus (Bovine), this protein is Adenylosuccinate synthetase isozyme 1.